The sequence spans 129 residues: ATP synthase epsilon chain (129 aa).

The protein belongs to the ATPase epsilon chain family. In terms of assembly, F-type ATPases have 2 components, CF(1) - the catalytic core - and CF(0) - the membrane proton channel. CF(1) has five subunits: alpha(3), beta(3), gamma(1), delta(1), epsilon(1). CF(0) has three main subunits: a, b and c.

It is found in the cell inner membrane. Produces ATP from ADP in the presence of a proton gradient across the membrane. The chain is ATP synthase epsilon chain from Campylobacter jejuni subsp. doylei (strain ATCC BAA-1458 / RM4099 / 269.97).